Reading from the N-terminus, the 258-residue chain is Synapse differentiation-inducing gene protein 1 (258 aa).

Over methionine 1–histidine 181 the chain is Cytoplasmic. Serine 137 bears the Phosphoserine mark. The helical transmembrane segment at leucine 182–tyrosine 202 threads the bilayer. The Extracellular portion of the chain corresponds to leucine 203–phenylalanine 228. An intramembrane region (helical) is located at residues leucine 229–isoleucine 249. Residues alanine 250–leucine 258 are Extracellular-facing.

It belongs to the CD225/Dispanin family. As to quaternary structure, homodimer. Interacts with GRIA1 and GRIA2.

It localises to the cell membrane. It is found in the early endosome membrane. The protein resides in the postsynaptic density membrane. Its subcellular location is the synapse. The protein localises to the cell projection. It localises to the dendrite. It is found in the dendritic spine. In terms of biological role, may regulate AMPA receptor content at nascent synapses, and have a role in postsynaptic development and maturation. The protein is Synapse differentiation-inducing gene protein 1 (SYNDIG1) of Macaca fascicularis (Crab-eating macaque).